Consider the following 245-residue polypeptide: MSITHLLIDIEGTTCPVSFVSEVLFPYAKQSLSSYLNDHQEDLDLKNILQEAEREWDGDPSPDSIKLRQATRNQNLNFIDSIKVYFEYLINVDRKSTALKDLQGKIWDNGYRKGEITSHLFNETTECLKRWHRRQLSLSVYSSGSIQAQKLLYRHTNDGDLEHLFDHWFDTHTGNKKECASYRKIATKISTNPSEILFISDNGEECDAAGASGMETLFSLRDGNPDQSPRSHRVIKTLNDVDEYL.

The protein belongs to the HAD-like hydrolase superfamily. MasA/MtnC family. In terms of assembly, monomer. Mg(2+) is required as a cofactor.

The enzyme catalyses 5-methylsulfanyl-2,3-dioxopentyl phosphate + H2O = 1,2-dihydroxy-5-(methylsulfanyl)pent-1-en-3-one + phosphate. It participates in amino-acid biosynthesis; L-methionine biosynthesis via salvage pathway; L-methionine from S-methyl-5-thio-alpha-D-ribose 1-phosphate: step 3/6. It functions in the pathway amino-acid biosynthesis; L-methionine biosynthesis via salvage pathway; L-methionine from S-methyl-5-thio-alpha-D-ribose 1-phosphate: step 4/6. In terms of biological role, bifunctional enzyme that catalyzes the enolization of 2,3-diketo-5-methylthiopentyl-1-phosphate (DK-MTP-1-P) into the intermediate 2-hydroxy-3-keto-5-methylthiopentenyl-1-phosphate (HK-MTPenyl-1-P), which is then dephosphorylated to form the acireductone 1,2-dihydroxy-3-keto-5-methylthiopentene (DHK-MTPene). The polypeptide is Enolase-phosphatase E1 (Parasynechococcus marenigrum (strain WH8102)).